A 453-amino-acid chain; its full sequence is Bifunctional protein GlmU (453 aa).

The interval 1-231 (MERTCLAVIL…EIEMTGCNTR (231 aa)) is pyrophosphorylase. UDP-N-acetyl-alpha-D-glucosamine-binding positions include 10–13 (LAAG), lysine 24, glutamine 77, 82–83 (GT), 105–107 (YGD), glycine 143, glutamate 157, asparagine 172, and asparagine 229. Mg(2+) is bound at residue aspartate 107. Mg(2+) is bound at residue asparagine 229. The linker stretch occupies residues 232-252 (AELAVIERFWQERRRHQMMLS). Residues 253–453 (GVTMIAPETV…AIKAAKKAKA (201 aa)) form an N-acetyltransferase region. Arginine 318 and lysine 336 together coordinate UDP-N-acetyl-alpha-D-glucosamine. Histidine 348 (proton acceptor) is an active-site residue. UDP-N-acetyl-alpha-D-glucosamine-binding residues include tyrosine 351 and asparagine 362. Acetyl-CoA-binding positions include alanine 365, 371 to 372 (NY), serine 390, serine 408, and arginine 425.

It in the N-terminal section; belongs to the N-acetylglucosamine-1-phosphate uridyltransferase family. This sequence in the C-terminal section; belongs to the transferase hexapeptide repeat family. Homotrimer. Mg(2+) is required as a cofactor.

It is found in the cytoplasm. The enzyme catalyses alpha-D-glucosamine 1-phosphate + acetyl-CoA = N-acetyl-alpha-D-glucosamine 1-phosphate + CoA + H(+). The catalysed reaction is N-acetyl-alpha-D-glucosamine 1-phosphate + UTP + H(+) = UDP-N-acetyl-alpha-D-glucosamine + diphosphate. The protein operates within nucleotide-sugar biosynthesis; UDP-N-acetyl-alpha-D-glucosamine biosynthesis; N-acetyl-alpha-D-glucosamine 1-phosphate from alpha-D-glucosamine 6-phosphate (route II): step 2/2. It participates in nucleotide-sugar biosynthesis; UDP-N-acetyl-alpha-D-glucosamine biosynthesis; UDP-N-acetyl-alpha-D-glucosamine from N-acetyl-alpha-D-glucosamine 1-phosphate: step 1/1. It functions in the pathway bacterial outer membrane biogenesis; LPS lipid A biosynthesis. In terms of biological role, catalyzes the last two sequential reactions in the de novo biosynthetic pathway for UDP-N-acetylglucosamine (UDP-GlcNAc). The C-terminal domain catalyzes the transfer of acetyl group from acetyl coenzyme A to glucosamine-1-phosphate (GlcN-1-P) to produce N-acetylglucosamine-1-phosphate (GlcNAc-1-P), which is converted into UDP-GlcNAc by the transfer of uridine 5-monophosphate (from uridine 5-triphosphate), a reaction catalyzed by the N-terminal domain. The polypeptide is Bifunctional protein GlmU (Rhizobium johnstonii (strain DSM 114642 / LMG 32736 / 3841) (Rhizobium leguminosarum bv. viciae)).